The following is a 389-amino-acid chain: Phosphoglycerate kinase (389 aa).

Substrate contacts are provided by residues 21 to 23 (DLN), arginine 36, 59 to 62 (HLGR), arginine 112, and arginine 145. ATP contacts are provided by residues lysine 196, glutamate 313, and 342–345 (GGDT).

This sequence belongs to the phosphoglycerate kinase family. As to quaternary structure, monomer.

The protein resides in the cytoplasm. The catalysed reaction is (2R)-3-phosphoglycerate + ATP = (2R)-3-phospho-glyceroyl phosphate + ADP. The protein operates within carbohydrate degradation; glycolysis; pyruvate from D-glyceraldehyde 3-phosphate: step 2/5. This chain is Phosphoglycerate kinase, found in Histophilus somni (strain 2336) (Haemophilus somnus).